Here is a 145-residue protein sequence, read N- to C-terminus: Small ribosomal subunit protein eS19 (145 aa).

K23 is subject to N6-acetyllysine. R67 is subject to Omega-N-methylarginine. An N6-acetyllysine mark is found at K111 and K115. K143 is modified (N6-succinyllysine).

The protein belongs to the eukaryotic ribosomal protein eS19 family. Component of the small ribosomal subunit. Part of the small subunit (SSU) processome, composed of more than 70 proteins and the RNA chaperone small nucleolar RNA (snoRNA) U3. Interacts with RPS19BP1.

Its subcellular location is the cytoplasm. It localises to the nucleus. The protein localises to the nucleolus. In terms of biological role, component of the small ribosomal subunit. The ribosome is a large ribonucleoprotein complex responsible for the synthesis of proteins in the cell. Required for pre-rRNA processing and maturation of 40S ribosomal subunits. Part of the small subunit (SSU) processome, first precursor of the small eukaryotic ribosomal subunit. During the assembly of the SSU processome in the nucleolus, many ribosome biogenesis factors, an RNA chaperone and ribosomal proteins associate with the nascent pre-rRNA and work in concert to generate RNA folding, modifications, rearrangements and cleavage as well as targeted degradation of pre-ribosomal RNA by the RNA exosome. This is Small ribosomal subunit protein eS19 (Rps19) from Rattus norvegicus (Rat).